A 429-amino-acid polypeptide reads, in one-letter code: Serine--tRNA ligase (429 aa).

229 to 231 (TAE) provides a ligand contact to L-serine. Residue 260–262 (RSE) participates in ATP binding. An L-serine-binding site is contributed by glutamate 283. 347–350 (EISS) lines the ATP pocket. L-serine is bound at residue serine 383.

Belongs to the class-II aminoacyl-tRNA synthetase family. Type-1 seryl-tRNA synthetase subfamily. Homodimer. The tRNA molecule binds across the dimer.

The protein resides in the cytoplasm. It catalyses the reaction tRNA(Ser) + L-serine + ATP = L-seryl-tRNA(Ser) + AMP + diphosphate + H(+). The enzyme catalyses tRNA(Sec) + L-serine + ATP = L-seryl-tRNA(Sec) + AMP + diphosphate + H(+). It participates in aminoacyl-tRNA biosynthesis; selenocysteinyl-tRNA(Sec) biosynthesis; L-seryl-tRNA(Sec) from L-serine and tRNA(Sec): step 1/1. Catalyzes the attachment of serine to tRNA(Ser). Is also able to aminoacylate tRNA(Sec) with serine, to form the misacylated tRNA L-seryl-tRNA(Sec), which will be further converted into selenocysteinyl-tRNA(Sec). The protein is Serine--tRNA ligase of Orientia tsutsugamushi (strain Boryong) (Rickettsia tsutsugamushi).